Reading from the N-terminus, the 166-residue chain is MLAKTVFPRGLLVLRSFSSVASKTLLKVGDVLRETRVFSSEDIKAYAEVSHDWNPLHFDPESARKAGFENRLVHGMLVSSMFPRIISAHFPGAVYVSQSLHFRSPVYIGDEILGLVQAIALRETKNKYIVKFSTKCFKNHNELVVIDGEATAILPNLDMLQKSPSE.

The transit peptide at 1–17 directs the protein to the mitochondrion; the sequence is MLAKTVFPRGLLVLRSF. The MaoC-like domain occupies 34-125; it reads ETRVFSSEDI…VQAIALRETK (92 aa).

In terms of assembly, homodimer. As to expression, expressed in leaves, roots, siliques and flowers.

The protein resides in the mitochondrion. It carries out the reaction a (3R)-hydroxyacyl-[ACP] = a (2E)-enoyl-[ACP] + H2O. The catalysed reaction is (3R)-hydroxyhexadecanoyl-[ACP] = (2E)-hexadecenoyl-[ACP] + H2O. The enzyme catalyses (3R)-hydroxydecanoyl-[ACP] = (2E)-decenoyl-[ACP] + H2O. It participates in lipid metabolism; fatty acid biosynthesis. Functionally, 3-hydroxyl-[acyl-carrier-protein] (3-hydroxyl-ACP) dehydratase required for mitochondrial fatty acid synthesis (mtFAS). MtFAS are essential for photorespiration and plant development, probably by influencing mitochondrial membrane lipid composition and other lipid metabolic pathways. This chain is 3-hydroxyacyl-[acyl-carrier-protein] dehydratase, mitochondrial, found in Arabidopsis thaliana (Mouse-ear cress).